Consider the following 65-residue polypeptide: Myosin-11 (65 aa).

The Myosin motor domain maps to 1-65 (RSGKLDAFLV…NWQWWRLFTK (65 aa)).

This sequence belongs to the TRAFAC class myosin-kinesin ATPase superfamily. Myosin family. As to quaternary structure, muscle myosin is a hexameric protein that consists of 2 heavy chain subunits (MHC), 2 alkali light chain subunits (MLC) and 2 regulatory light chain subunits (MLC-2).

Its subcellular location is the melanosome. It is found in the cytoplasm. The protein localises to the myofibril. In terms of biological role, muscle contraction. The protein is Myosin-11 (MYH11) of Sus scrofa (Pig).